The sequence spans 642 residues: Arginine--tRNA ligase, chloroplastic/mitochondrial (642 aa).

The transit peptide at Met1–Met53 directs the protein to the chloroplast and mitochondrion. An N-acetylalanine modification is found at Ala54. The 'HIGH' region motif lies at Pro190–Leu201.

Belongs to the class-I aminoacyl-tRNA synthetase family.

It is found in the plastid. It localises to the chloroplast. The protein resides in the mitochondrion. The catalysed reaction is tRNA(Arg) + L-arginine + ATP = L-arginyl-tRNA(Arg) + AMP + diphosphate. In terms of biological role, forms part of a macromolecular complex that catalyzes the attachment of specific amino acids to cognate tRNAs during protein synthesis. This Arabidopsis thaliana (Mouse-ear cress) protein is Arginine--tRNA ligase, chloroplastic/mitochondrial.